A 589-amino-acid chain; its full sequence is Arginine--tRNA ligase (589 aa).

The 'HIGH' region signature appears at 131–141 (ANPTGPLHVGH).

This sequence belongs to the class-I aminoacyl-tRNA synthetase family. As to quaternary structure, monomer.

The protein resides in the cytoplasm. The enzyme catalyses tRNA(Arg) + L-arginine + ATP = L-arginyl-tRNA(Arg) + AMP + diphosphate. The protein is Arginine--tRNA ligase of Legionella pneumophila (strain Paris).